Consider the following 736-residue polypeptide: DNA ligase (736 aa).

NAD(+) is bound by residues 41 to 45, 91 to 92, and Glu125; these read DQEYD and SL. The active-site N6-AMP-lysine intermediate is the Lys127. Residue Arg148 participates in NAD(+) binding. Positions 170–205 are disordered; the sequence is ELTPLPLAGGAGGGPLDDSGSAPTPDPSRRREGKWN. NAD(+)-binding residues include Glu215, Lys347, and Lys371. Positions 463, 466, 481, and 487 each coordinate Zn(2+). Residues 656-736 form the BRCT domain; that stretch reads TLDSPVAGKT…GWAEIVAAAG (81 aa).

It belongs to the NAD-dependent DNA ligase family. LigA subfamily. It depends on Mg(2+) as a cofactor. Mn(2+) serves as cofactor.

The catalysed reaction is NAD(+) + (deoxyribonucleotide)n-3'-hydroxyl + 5'-phospho-(deoxyribonucleotide)m = (deoxyribonucleotide)n+m + AMP + beta-nicotinamide D-nucleotide.. Its function is as follows. DNA ligase that catalyzes the formation of phosphodiester linkages between 5'-phosphoryl and 3'-hydroxyl groups in double-stranded DNA using NAD as a coenzyme and as the energy source for the reaction. It is essential for DNA replication and repair of damaged DNA. The chain is DNA ligase from Erythrobacter litoralis (strain HTCC2594).